The sequence spans 449 residues: C4-dicarboxylate transport protein (449 aa).

Helical transmembrane passes span 18-38 (PFYL…ALLG), 61-81 (MIIS…VAHV), 93-113 (VYFL…AHVV), 159-179 (FVGD…IALA), 202-222 (LVQM…AFTI), 244-264 (SLLF…FSIL), 346-366 (LFLV…AGFI), and 369-389 (AATL…ILGV).

Belongs to the dicarboxylate/amino acid:cation symporter (DAACS) (TC 2.A.23) family.

The protein localises to the cell inner membrane. Responsible for the transport of dicarboxylates such as succinate, fumarate, and malate from the periplasm across the membrane. The protein is C4-dicarboxylate transport protein of Xylella fastidiosa (strain M23).